A 110-amino-acid chain; its full sequence is MSLSEARFHDLVDATQQALEDLFDESDLDLDMENSAGVLTVKFDNGSQLIFSRQEPLRQLWLADRSGGFHFDYDEESGKWVCEKTEELLGEMLERIVWERAGEKLDFDEI.

This sequence belongs to the frataxin family.

Functionally, involved in iron-sulfur (Fe-S) cluster assembly. May act as a regulator of Fe-S biogenesis. This Pseudomonas entomophila (strain L48) protein is Iron-sulfur cluster assembly protein CyaY.